Consider the following 249-residue polypeptide: Enolase-phosphatase E1 (249 aa).

Asp14 and Glu16 together coordinate Mg(2+). Substrate-binding positions include 141–142 (SS) and Lys175. Asp200 lines the Mg(2+) pocket.

This sequence belongs to the HAD-like hydrolase superfamily. MasA/MtnC family. In terms of assembly, monomer. The cofactor is Mg(2+).

The protein localises to the cytoplasm. Its subcellular location is the nucleus. It catalyses the reaction 5-methylsulfanyl-2,3-dioxopentyl phosphate + H2O = 1,2-dihydroxy-5-(methylsulfanyl)pent-1-en-3-one + phosphate. The protein operates within amino-acid biosynthesis; L-methionine biosynthesis via salvage pathway; L-methionine from S-methyl-5-thio-alpha-D-ribose 1-phosphate: step 3/6. It functions in the pathway amino-acid biosynthesis; L-methionine biosynthesis via salvage pathway; L-methionine from S-methyl-5-thio-alpha-D-ribose 1-phosphate: step 4/6. In terms of biological role, bifunctional enzyme that catalyzes the enolization of 2,3-diketo-5-methylthiopentyl-1-phosphate (DK-MTP-1-P) into the intermediate 2-hydroxy-3-keto-5-methylthiopentenyl-1-phosphate (HK-MTPenyl-1-P), which is then dephosphorylated to form the acireductone 1,2-dihydroxy-3-keto-5-methylthiopentene (DHK-MTPene). This Drosophila mojavensis (Fruit fly) protein is Enolase-phosphatase E1.